The sequence spans 430 residues: Serine hydroxymethyltransferase 1 (430 aa).

(6S)-5,6,7,8-tetrahydrofolate-binding positions include Leu-132 and 136–138 (GHL). Lys-241 is subject to N6-(pyridoxal phosphate)lysine.

The protein belongs to the SHMT family. As to quaternary structure, homodimer. Pyridoxal 5'-phosphate is required as a cofactor.

It localises to the cytoplasm. The enzyme catalyses (6R)-5,10-methylene-5,6,7,8-tetrahydrofolate + glycine + H2O = (6S)-5,6,7,8-tetrahydrofolate + L-serine. Its pathway is one-carbon metabolism; tetrahydrofolate interconversion. The protein operates within amino-acid biosynthesis; glycine biosynthesis; glycine from L-serine: step 1/1. Functionally, catalyzes the reversible interconversion of serine and glycine with tetrahydrofolate (THF) serving as the one-carbon carrier. This reaction serves as the major source of one-carbon groups required for the biosynthesis of purines, thymidylate, methionine, and other important biomolecules. Also exhibits THF-independent aldolase activity toward beta-hydroxyamino acids, producing glycine and aldehydes, via a retro-aldol mechanism. This Bordetella parapertussis (strain 12822 / ATCC BAA-587 / NCTC 13253) protein is Serine hydroxymethyltransferase 1.